The sequence spans 108 residues: Small ribosomal subunit protein eS25x (108 aa).

Residues 1–36 (MAPKKDKVPPPSSKPAKSGGGKQKKKKWSKGKQKEK) form a disordered region. The span at 22–31 (KQKKKKWSKG) shows a compositional bias: basic residues.

The protein belongs to the eukaryotic ribosomal protein eS25 family.

The polypeptide is Small ribosomal subunit protein eS25x (RPS25D) (Arabidopsis thaliana (Mouse-ear cress)).